A 269-amino-acid polypeptide reads, in one-letter code: MINKTLLQKRFNGAAVSYDRYANVQKKMAHSLLSILKERYSETASIRILELGCGTGYVTEQLSKLFPKSHITAVDFAESMIAIAQTRQNVKNVTFHCEDIERLRLEESYDVIISNATFQWLNNLQQVLRNLFQHLSIDGILLFSTFGHETFQELHASFQRAKEERNIKNETSIGQRFYSKDQLLHICKIETGDVHVSETCYIESFTEVKEFLHSIRKVGATNSNEGSYCQSPSLFRAMLRIYERDFTGNEGIMATYHALFIHITKEGKR.

Belongs to the methyltransferase superfamily.

It carries out the reaction malonyl-[ACP] + S-adenosyl-L-methionine = malonyl-[ACP] methyl ester + S-adenosyl-L-homocysteine. The protein operates within cofactor biosynthesis; biotin biosynthesis. Functionally, converts the free carboxyl group of a malonyl-thioester to its methyl ester by transfer of a methyl group from S-adenosyl-L-methionine (SAM). It allows to synthesize pimeloyl-ACP via the fatty acid synthetic pathway. The polypeptide is Malonyl-[acyl-carrier protein] O-methyltransferase (Bacillus cereus (strain ATCC 14579 / DSM 31 / CCUG 7414 / JCM 2152 / NBRC 15305 / NCIMB 9373 / NCTC 2599 / NRRL B-3711)).